We begin with the raw amino-acid sequence, 199 residues long: Pyridoxine/pyridoxamine 5'-phosphate oxidase (199 aa).

FMN contacts are provided by residues 45-50, 60-61, R66, K67, and Q89; these read RVVLLK and FT. Substrate is bound at residue K50. 3 residues coordinate substrate: Y107, R111, and S115. FMN-binding positions include 124-125 and W169; that span reads QS. 175–177 contacts substrate; the sequence is RIH. Residue R179 participates in FMN binding.

The protein belongs to the pyridoxamine 5'-phosphate oxidase family. As to quaternary structure, homodimer. Requires FMN as cofactor.

It carries out the reaction pyridoxamine 5'-phosphate + O2 + H2O = pyridoxal 5'-phosphate + H2O2 + NH4(+). The catalysed reaction is pyridoxine 5'-phosphate + O2 = pyridoxal 5'-phosphate + H2O2. The protein operates within cofactor metabolism; pyridoxal 5'-phosphate salvage; pyridoxal 5'-phosphate from pyridoxamine 5'-phosphate: step 1/1. It participates in cofactor metabolism; pyridoxal 5'-phosphate salvage; pyridoxal 5'-phosphate from pyridoxine 5'-phosphate: step 1/1. Functionally, catalyzes the oxidation of either pyridoxine 5'-phosphate (PNP) or pyridoxamine 5'-phosphate (PMP) into pyridoxal 5'-phosphate (PLP). The sequence is that of Pyridoxine/pyridoxamine 5'-phosphate oxidase from Ehrlichia chaffeensis (strain ATCC CRL-10679 / Arkansas).